The following is a 361-amino-acid chain: Molybdopterin synthase catalytic subunit (361 aa).

Residues 101–102 (HR), Lys117, and 124–126 (KKE) contribute to the substrate site.

Belongs to the MoaE family. MOCS2B subfamily. As to quaternary structure, heterotetramer; composed of 2 small (Mocs2A) and 2 large (Mocs2B) subunits.

The protein resides in the cytoplasm. The catalysed reaction is 2 [molybdopterin-synthase sulfur-carrier protein]-C-terminal-Gly-aminoethanethioate + cyclic pyranopterin phosphate + H2O = molybdopterin + 2 [molybdopterin-synthase sulfur-carrier protein]-C-terminal Gly-Gly + 2 H(+). The protein operates within cofactor biosynthesis; molybdopterin biosynthesis. In terms of biological role, catalytic subunit of the molybdopterin synthase complex, a complex that catalyzes the conversion of precursor Z into molybdopterin. Acts by mediating the incorporation of 2 sulfur atoms from thiocarboxylated Mocs2A into precursor Z to generate a dithiolene group. This Drosophila pseudoobscura pseudoobscura (Fruit fly) protein is Molybdopterin synthase catalytic subunit.